Consider the following 644-residue polypeptide: 3D-(3,5/4)-trihydroxycyclohexane-1,2-dione hydrolase 2 (644 aa).

Glu65 provides a ligand contact to thiamine diphosphate. The segment at 442 to 522 (SLPGDLQRMW…INVLLFDNSG (81 aa)) is thiamine pyrophosphate binding. Mg(2+)-binding residues include Asp493 and Asn520.

Belongs to the TPP enzyme family. It depends on Mg(2+) as a cofactor. Thiamine diphosphate is required as a cofactor.

It catalyses the reaction 3D-3,5/4-trihydroxycyclohexane-1,2-dione + H2O = 5-deoxy-D-glucuronate + H(+). The protein operates within polyol metabolism; myo-inositol degradation into acetyl-CoA; acetyl-CoA from myo-inositol: step 3/7. Involved in the cleavage of the C1-C2 bond of 3D-(3,5/4)-trihydroxycyclohexane-1,2-dione (THcHDO) to yield 5-deoxy-glucuronate (5DG). The protein is 3D-(3,5/4)-trihydroxycyclohexane-1,2-dione hydrolase 2 of Bacillus cereus (strain ZK / E33L).